The primary structure comprises 370 residues: Chloromuconate cycloisomerase (370 aa).

Lysine 165 serves as the catalytic Proton acceptor. Residues aspartate 194, glutamate 220, and aspartate 245 each contribute to the Mn(2+) site. Glutamate 323 (proton donor) is an active-site residue.

It belongs to the mandelate racemase/muconate lactonizing enzyme family. Mn(2+) serves as cofactor.

The catalysed reaction is 2-[(2R)-2-chloro-2,5-dihydro-5-oxofuryl]acetate = 3-chloro-cis,cis-muconate + H(+). The protein operates within aromatic compound metabolism; 3-chlorocatechol degradation. This is Chloromuconate cycloisomerase (tfdDI) from Cupriavidus pinatubonensis (strain JMP 134 / LMG 1197) (Cupriavidus necator (strain JMP 134)).